The chain runs to 469 residues: Small ribosomal subunit protein mS29 (469 aa).

ATP is bound at residue Leu150.

The protein belongs to the mitochondrion-specific ribosomal protein mS29 family. Component of the mitochondrial small ribosomal subunit (mt-SSU). Mature N.crassa 74S mitochondrial ribosomes consist of a small (37S) and a large (54S) subunit. The 37S small subunit contains a 16S ribosomal RNA (16S mt-rRNA) and 32 different proteins. The 54S large subunit contains a 23S rRNA (23S mt-rRNA) and 42 different proteins.

The protein localises to the mitochondrion. In terms of biological role, component of the mitochondrial ribosome (mitoribosome), a dedicated translation machinery responsible for the synthesis of mitochondrial genome-encoded proteins, including at least some of the essential transmembrane subunits of the mitochondrial respiratory chain. The mitoribosomes are attached to the mitochondrial inner membrane and translation products are cotranslationally integrated into the membrane. This chain is Small ribosomal subunit protein mS29 (rsm23), found in Neurospora crassa (strain ATCC 24698 / 74-OR23-1A / CBS 708.71 / DSM 1257 / FGSC 987).